A 65-amino-acid polypeptide reads, in one-letter code: Large ribosomal subunit protein bL35 (65 aa).

The protein belongs to the bacterial ribosomal protein bL35 family.

In Photorhabdus laumondii subsp. laumondii (strain DSM 15139 / CIP 105565 / TT01) (Photorhabdus luminescens subsp. laumondii), this protein is Large ribosomal subunit protein bL35.